Reading from the N-terminus, the 254-residue chain is Pimeloyl-[acyl-carrier protein] methyl ester esterase (254 aa).

An AB hydrolase-1 domain is found at L14–P242. Residues W20, S82–L83, and F143–Q147 each bind substrate. S82 acts as the Nucleophile in catalysis. Active-site residues include D207 and H235. H235 is a substrate binding site.

It belongs to the AB hydrolase superfamily. Carboxylesterase BioH family. Monomer.

The protein localises to the cytoplasm. It carries out the reaction 6-carboxyhexanoyl-[ACP] methyl ester + H2O = 6-carboxyhexanoyl-[ACP] + methanol + H(+). It participates in cofactor biosynthesis; biotin biosynthesis. Its function is as follows. The physiological role of BioH is to remove the methyl group introduced by BioC when the pimeloyl moiety is complete. It allows to synthesize pimeloyl-ACP via the fatty acid synthetic pathway through the hydrolysis of the ester bonds of pimeloyl-ACP esters. This Aeromonas hydrophila subsp. hydrophila (strain ATCC 7966 / DSM 30187 / BCRC 13018 / CCUG 14551 / JCM 1027 / KCTC 2358 / NCIMB 9240 / NCTC 8049) protein is Pimeloyl-[acyl-carrier protein] methyl ester esterase.